Consider the following 462-residue polypeptide: Cleavage and polyadenylation specificity factor subunit 7 (462 aa).

2 disordered regions span residues 34-68 (VLTA…NKTP) and 161-213 (TRQN…PSVL). Pro residues predominate over residues 50–62 (EPPPPVRQEPAPK). An RRM domain is found at 82 to 162 (AAVYVGSFSW…EKVDVRPATR (81 aa)). Positions 181 to 190 (HSRDSSDSAD) are enriched in basic and acidic residues. Thr194 is modified (phosphothreonine). At Ser196 the chain carries Phosphoserine. A Glycyl lysine isopeptide (Lys-Gly) (interchain with G-Cter in SUMO2) cross-link involves residue Lys345. Residues 400–462 (SVGASGSSSR…HRDRERDRHH (63 aa)) are disordered. Phosphoserine occurs at positions 404 and 414. Positions 409–460 (RKRHRSRERSPSRSRESSRRHRDLLHNEDRHDDYFQERNREHERHRDRERDR) are arg/Ser-rich domain. Composition is skewed to basic and acidic residues over residues 416–425 (ERSPSRSRES) and 432–462 (LLHN…DRHH).

Belongs to the RRM CPSF6/7 family. Component of the cleavage factor Im (CFIm) complex which is a heterotetramer composed of two subunits of NUDT21/CPSF5 and two subunits of CPSF6 or CPSF7 or a heterodimer of CPSF6 and CPSF7. The cleavage factor Im (CFIm) complex associates with the CPSF and CSTF complexes to promote the assembly of the core mRNA 3'-processing machinery. Interacts with NUDT21/CPSF5. Interacts (via Arg/Ser-rich domain) with FIP1L1 (preferentially via unphosphorylated form and Arg/Glu/Asp-rich region); this interaction mediates, at least in part, the interaction between the CFIm and CPSF complexes and may be inhibited by CPSF7 hyper-phosphorylation. Post-translationally, phosphorylated. Asymmetrically dimethylated on arginine residues by PRMT1.

The protein resides in the nucleus. Its subcellular location is the cytoplasm. Its function is as follows. Component of the cleavage factor Im (CFIm) complex that functions as an activator of the pre-mRNA 3'-end cleavage and polyadenylation processing required for the maturation of pre-mRNA into functional mRNAs. CFIm contributes to the recruitment of multiprotein complexes on specific sequences on the pre-mRNA 3'-end, so called cleavage and polyadenylation signals (pA signals). Most pre-mRNAs contain multiple pA signals, resulting in alternative cleavage and polyadenylation (APA) producing mRNAs with variable 3'-end formation. The CFIm complex acts as a key regulator of cleavage and polyadenylation site choice during APA through its binding to 5'-UGUA-3' elements localized in the 3'-untranslated region (UTR) for a huge number of pre-mRNAs. CPSF7 activates directly the mRNA 3'-processing machinery. Binds to pA signals in RNA substrates. The chain is Cleavage and polyadenylation specificity factor subunit 7 from Rattus norvegicus (Rat).